We begin with the raw amino-acid sequence, 165 residues long: ATP synthase subunit b (165 aa).

The chain crosses the membrane as a helical span at residues 5–27 (INSTTLGNIIITLGSVFLLYYLI).

Belongs to the ATPase B chain family. As to quaternary structure, F-type ATPases have 2 components, F(1) - the catalytic core - and F(0) - the membrane proton channel. F(1) has five subunits: alpha(3), beta(3), gamma(1), delta(1), epsilon(1). F(0) has three main subunits: a(1), b(2) and c(10-14). The alpha and beta chains form an alternating ring which encloses part of the gamma chain. F(1) is attached to F(0) by a central stalk formed by the gamma and epsilon chains, while a peripheral stalk is formed by the delta and b chains.

Its subcellular location is the cell membrane. F(1)F(0) ATP synthase produces ATP from ADP in the presence of a proton or sodium gradient. F-type ATPases consist of two structural domains, F(1) containing the extramembraneous catalytic core and F(0) containing the membrane proton channel, linked together by a central stalk and a peripheral stalk. During catalysis, ATP synthesis in the catalytic domain of F(1) is coupled via a rotary mechanism of the central stalk subunits to proton translocation. Its function is as follows. Component of the F(0) channel, it forms part of the peripheral stalk, linking F(1) to F(0). The polypeptide is ATP synthase subunit b (Streptococcus thermophilus (strain CNRZ 1066)).